A 231-amino-acid polypeptide reads, in one-letter code: Trypsin (231 aa).

Residues 1–8 (FPTDDDDK) constitute a propeptide, activation peptide. One can recognise a Peptidase S1 domain in the interval 9–229 (IVGGYTCAAN…YVNWIQQTIA (221 aa)). Disulfide bonds link cysteine 15–cysteine 145, cysteine 33–cysteine 49, cysteine 117–cysteine 218, cysteine 124–cysteine 191, cysteine 156–cysteine 170, and cysteine 181–cysteine 205. Residue histidine 48 is the Charge relay system of the active site. Residues glutamate 60, asparagine 62, valine 65, and glutamate 70 each contribute to the Ca(2+) site. Aspartate 92 functions as the Charge relay system in the catalytic mechanism. The Charge relay system role is filled by serine 185.

Belongs to the peptidase S1 family. The cofactor is Ca(2+).

The protein resides in the secreted. Its subcellular location is the extracellular space. It carries out the reaction Preferential cleavage: Arg-|-Xaa, Lys-|-Xaa.. The chain is Trypsin from Sus scrofa (Pig).